A 258-amino-acid chain; its full sequence is Spindlin-2 (258 aa).

Residues 1-47 (MKTPHKKATARQQTREIVDDHTLSASMRKKKISQKKQRGRPSSQTRR) are disordered. The segment covering 13–22 (QTREIVDDHT) has biased composition (basic and acidic residues). Positions 27 to 39 (MRKKKISQKKQRG) are enriched in basic residues. Tudor-like domain regions lie at residues 50–99 (VGCR…LELH), 129–178 (IGKA…YQLL), and 210–255 (IGKH…YDLV). Histone H3K4me3 and H3R8me2a binding stretches follow at residues Glu-138 and 246–248 (DFH).

Belongs to the SPIN/STSY family. Interacts with C11orf84/SPINDOC.

It localises to the nucleus. Functionally, may be involved in the regulation of cell cycle progression. Exhibits H3K4me3-binding activity. In Bos taurus (Bovine), this protein is Spindlin-2 (SPIN2).